The chain runs to 205 residues: Cytochrome c biogenesis ATP-binding export protein CcmA (205 aa).

Positions 2-204 (LEVSNLTAIR…SPKLRKIKLG (203 aa)) constitute an ABC transporter domain. An ATP-binding site is contributed by 34-41 (GRNGTGKT).

This sequence belongs to the ABC transporter superfamily. CcmA exporter (TC 3.A.1.107) family. The complex is composed of two ATP-binding proteins (CcmA) and two transmembrane proteins (CcmB).

It is found in the cell inner membrane. The enzyme catalyses heme b(in) + ATP + H2O = heme b(out) + ADP + phosphate + H(+). Part of the ABC transporter complex CcmAB involved in the biogenesis of c-type cytochromes; once thought to export heme, this seems not to be the case, but its exact role is uncertain. Responsible for energy coupling to the transport system. This is Cytochrome c biogenesis ATP-binding export protein CcmA from Vibrio vulnificus (strain YJ016).